The following is a 1368-amino-acid chain: DNA-directed RNA polymerase subunit beta (1368 aa).

This sequence belongs to the RNA polymerase beta chain family. The RNAP catalytic core consists of 2 alpha, 1 beta, 1 beta' and 1 omega subunit. When a sigma factor is associated with the core the holoenzyme is formed, which can initiate transcription.

It carries out the reaction RNA(n) + a ribonucleoside 5'-triphosphate = RNA(n+1) + diphosphate. Functionally, DNA-dependent RNA polymerase catalyzes the transcription of DNA into RNA using the four ribonucleoside triphosphates as substrates. This Paraburkholderia xenovorans (strain LB400) protein is DNA-directed RNA polymerase subunit beta.